Reading from the N-terminus, the 131-residue chain is ATP synthase lipid-binding protein, mitochondrial (131 aa).

The N-terminal 56 residues, M1–K56, are a transit peptide targeting the mitochondrion. The chain crosses the membrane as a helical span at residues V72 to Y92. An N6,N6,N6-trimethyllysine modification is found at K99. Residues I107–L127 form a helical membrane-spanning segment.

The protein belongs to the ATPase C chain family. In terms of assembly, F-type ATPases have 2 components, CF(1) - the catalytic core - and CF(0) - the membrane proton channel. CF(1) has five subunits: alpha(3), beta(3), gamma(1), delta(1), epsilon(1). CF(0) has three main subunits: a, b and c. Post-translationally, trimethylated by ATPSCKMT at Lys-99. Methylation may be required for proper incorporation of the C subunit into the ATP synthase complex and mitochondrial respiration.

The protein resides in the mitochondrion membrane. Its function is as follows. Mitochondrial membrane ATP synthase (F(1)F(0) ATP synthase or Complex V) produces ATP from ADP in the presence of a proton gradient across the membrane which is generated by electron transport complexes of the respiratory chain. F-type ATPases consist of two structural domains, F(1) - containing the extramembraneous catalytic core and F(0) - containing the membrane proton channel, linked together by a central stalk and a peripheral stalk. During catalysis, ATP synthesis in the catalytic domain of F(1) is coupled via a rotary mechanism of the central stalk subunits to proton translocation. Part of the complex F(0) domain. A homomeric c-ring of probably 10 subunits is part of the complex rotary element. The sequence is that of ATP synthase lipid-binding protein, mitochondrial from Manduca sexta (Tobacco hawkmoth).